Here is a 64-residue protein sequence, read N- to C-terminus: Large ribosomal subunit protein bL35 (64 aa).

A disordered region spans residues 1–54; the sequence is MPKIKSNSGAAKRFKKTAHGFKHKQSFRSHILTKKSTKRKRQLRGMKQIHDADK. Positions 12-44 are enriched in basic residues; that stretch reads KRFKKTAHGFKHKQSFRSHILTKKSTKRKRQLR.

Belongs to the bacterial ribosomal protein bL35 family.

This is Large ribosomal subunit protein bL35 from Chromohalobacter salexigens (strain ATCC BAA-138 / DSM 3043 / CIP 106854 / NCIMB 13768 / 1H11).